We begin with the raw amino-acid sequence, 206 residues long: Thymidylate kinase (206 aa).

Position 10–17 (10–17 (GIDGAGKS)) interacts with ATP.

The protein belongs to the thymidylate kinase family.

It carries out the reaction dTMP + ATP = dTDP + ADP. In terms of biological role, phosphorylation of dTMP to form dTDP in both de novo and salvage pathways of dTTP synthesis. In Neisseria meningitidis serogroup B (strain ATCC BAA-335 / MC58), this protein is Thymidylate kinase (tmk).